A 454-amino-acid polypeptide reads, in one-letter code: Ornithine aminotransferase (454 aa).

N6-(pyridoxal phosphate)lysine is present on Lys280.

This sequence belongs to the class-III pyridoxal-phosphate-dependent aminotransferase family. Requires pyridoxal 5'-phosphate as cofactor.

It is found in the cytoplasm. The enzyme catalyses a 2-oxocarboxylate + L-ornithine = L-glutamate 5-semialdehyde + an L-alpha-amino acid. It functions in the pathway amino-acid biosynthesis; L-proline biosynthesis; L-glutamate 5-semialdehyde from L-ornithine: step 1/1. The sequence is that of Ornithine aminotransferase (otaA) from Emericella nidulans (strain FGSC A4 / ATCC 38163 / CBS 112.46 / NRRL 194 / M139) (Aspergillus nidulans).